Here is a 175-residue protein sequence, read N- to C-terminus: Archaemetzincin (175 aa).

Zn(2+) is bound at residue histidine 125. Catalysis depends on glutamate 126, which acts as the Proton acceptor. Zn(2+) contacts are provided by histidine 129, histidine 135, cysteine 136, cysteine 141, cysteine 160, and cysteine 163.

This sequence belongs to the peptidase M54 family. As to quaternary structure, monomer. Requires Zn(2+) as cofactor.

Functionally, probable zinc metalloprotease whose natural substrate is unknown. Does not show endo- or exopeptidase activity against resorufin labeled casein, p-nitroanilide (pNA), amidomethylcoumarin (AMC) (one to three amino acids in length), and hippuryl-aminoacid substrates. In Methanopyrus kandleri (strain AV19 / DSM 6324 / JCM 9639 / NBRC 100938), this protein is Archaemetzincin.